The following is a 234-amino-acid chain: Sugar fermentation stimulation protein A (234 aa).

Residues 201 to 220 (LLSEAQQRGVEILAYKAELS) constitute a DNA-binding region (H-T-H motif).

This sequence belongs to the SfsA family.

In terms of biological role, binds to DNA non-specifically. Could be a regulatory factor involved in maltose metabolism. This Escherichia coli O7:K1 (strain IAI39 / ExPEC) protein is Sugar fermentation stimulation protein A.